The following is a 186-amino-acid chain: ATP-dependent protease subunit HslV (186 aa).

Thr14 is an active-site residue. 3 residues coordinate Na(+): Ala168, Cys171, and Thr174.

It belongs to the peptidase T1B family. HslV subfamily. A double ring-shaped homohexamer of HslV is capped on each side by a ring-shaped HslU homohexamer. The assembly of the HslU/HslV complex is dependent on binding of ATP.

Its subcellular location is the cytoplasm. The catalysed reaction is ATP-dependent cleavage of peptide bonds with broad specificity.. Allosterically activated by HslU binding. Its function is as follows. Protease subunit of a proteasome-like degradation complex believed to be a general protein degrading machinery. The polypeptide is ATP-dependent protease subunit HslV (Bradyrhizobium diazoefficiens (strain JCM 10833 / BCRC 13528 / IAM 13628 / NBRC 14792 / USDA 110)).